Here is a 457-residue protein sequence, read N- to C-terminus: Dihydrolipoyllysine-residue acetyltransferase component of pyruvate dehydrogenase complex, mitochondrial (457 aa).

The N-terminal 30 residues, 1–30 (MLSAALRRRVLAPTHSALRTGFAAHVVRHY), are a transit peptide targeting the mitochondrion. Residues 36–112 (HQVIKMPALS…PVGSPIAVLV (77 aa)) enclose the Lipoyl-binding domain. Lys77 carries the N6-lipoyllysine modification. Residues 129 to 168 (AGGDAAKPAAPKKEEKSESKSESASAPEPTPEPQQYQSQG) form a disordered region. The segment covering 139–149 (PKKEEKSESKS) has biased composition (basic and acidic residues). The residue at position 148 (Lys148) is an N6-crotonyllysine. A Peripheral subunit-binding (PSBD) domain is found at 179 to 216 (NISASAKRLAREKGISIDGLKGTGKNGQITEEDVKKAI). Catalysis depends on residues His430 and Asp434.

It belongs to the 2-oxoacid dehydrogenase family. As to quaternary structure, eukaryotic pyruvate dehydrogenase (PDH) complexes are organized as a core consisting of the oligomeric dihydrolipoamide acetyl-transferase (E2), around which are arranged multiple copies of pyruvate dehydrogenase (E1), dihydrolipoamide dehydrogenase (E3) and protein X (E3BP) bound by non-covalent bonds. Interacts with SIR5; the interaction is direct. (R)-lipoate serves as cofactor. Decrotonylated at 'Lys-148' by SIR5, which inhibits the activity of the pyruvate dehydrogenase complex (PDC).

It is found in the mitochondrion matrix. It carries out the reaction N(6)-[(R)-dihydrolipoyl]-L-lysyl-[protein] + acetyl-CoA = N(6)-[(R)-S(8)-acetyldihydrolipoyl]-L-lysyl-[protein] + CoA. In terms of biological role, the pyruvate dehydrogenase complex catalyzes the overall conversion of pyruvate to acetyl-CoA and CO(2). High pyruvate dehydrogenase complex activity is required for sufficient energy production during germination of conidia. In Fusarium oxysporum f. sp. lycopersici (strain 4287 / CBS 123668 / FGSC 9935 / NRRL 34936) (Fusarium vascular wilt of tomato), this protein is Dihydrolipoyllysine-residue acetyltransferase component of pyruvate dehydrogenase complex, mitochondrial.